We begin with the raw amino-acid sequence, 272 residues long: Phosphate import ATP-binding protein PstB (272 aa).

Residues 26–267 enclose the ABC transporter domain; that stretch reads VAARNLNFYY…PADRRTQDYI (242 aa). Residue 58–65 participates in ATP binding; the sequence is GPSGCGKS.

Belongs to the ABC transporter superfamily. Phosphate importer (TC 3.A.1.7) family. As to quaternary structure, the complex is composed of two ATP-binding proteins (PstB), two transmembrane proteins (PstC and PstA) and a solute-binding protein (PstS).

Its subcellular location is the cell inner membrane. It carries out the reaction phosphate(out) + ATP + H2O = ADP + 2 phosphate(in) + H(+). In terms of biological role, part of the ABC transporter complex PstSACB involved in phosphate import. Responsible for energy coupling to the transport system. This is Phosphate import ATP-binding protein PstB from Nitrobacter hamburgensis (strain DSM 10229 / NCIMB 13809 / X14).